The following is a 509-amino-acid chain: Glycogen synthase 2 (509 aa).

Position 15 (lysine 15) interacts with ADP-alpha-D-glucose.

Belongs to the glycosyltransferase 1 family. Bacterial/plant glycogen synthase subfamily.

The catalysed reaction is [(1-&gt;4)-alpha-D-glucosyl](n) + ADP-alpha-D-glucose = [(1-&gt;4)-alpha-D-glucosyl](n+1) + ADP + H(+). It participates in glycan biosynthesis; glycogen biosynthesis. Synthesizes alpha-1,4-glucan chains using ADP-glucose. The sequence is that of Glycogen synthase 2 (glgA2) from Agrobacterium fabrum (strain C58 / ATCC 33970) (Agrobacterium tumefaciens (strain C58)).